Reading from the N-terminus, the 933-residue chain is MRALAVLSVTLVMACTEAFFPFISRGKELLWGKPEESRVSSVLEESKRLVDTAMYATMQRNLKKRGILSPAQLLSFSKLPEPTSGVIARAAEIMETSIQAMKRKVNLKTQQSQHPTDALSEDLLSIIANMSGCLPYMLPPKCPNTCLANKYRPITGACNNRDHPRWGASNTALARWLPPVYEDGFSQPRGWNPGFLYNGFPLPPVREVTRHVIQVSNEVVTDDDRYSDLLMAWGQYIDHDIAFTPQSTSKAAFGGGADCQMTCENQNPCFPIQLPEEARPAAGTACLPFYRSSAACGTGDQGALFGNLSTANPRQQMNGLTSFLDASTVYGSSPALERQLRNWTSAEGLLRVHARLRDSGRAYLPFVPPRAPAACAPEPGIPGETRGPCFLAGDGRASEVPSLTALHTLWLREHNRLAAALKALNAHWSADAVYQEARKVVGALHQIITLRDYIPRILGPEAFQQYVGPYEGYDSTANPTVSNVFSTAAFRFGHATIHPLVRRLDASFQEHPDLPGLWLHQAFFSPWTLLRGGGLDPLIRGLLARPAKLQVQDQLMNEELTERLFVLSNSSTLDLASINLQRGRDHGLPGYNEWREFCGLPRLETPADLSTAIASRSVADKILDLYKHPDNIDVWLGGLAENFLPRARTGPLFACLIGKQMKALRDGDWFWWENSHVFTDAQRRELEKHSLSRVICDNTGLTRVPMDAFQVGKFPEDFESCDSITGMNLEAWRETFPQDDKCGFPESVENGDFVHCEESGRRVLVYSCRHGYELQGREQLTCTQEGWDFQPPLCKDVNECADGAHPPCHASARCRNTKGGFQCLCADPYELGDDGRTCVDSGRLPRVTWISMSLAALLIGGFAGLTSTVICRWTRTGTKSTLPISETGGGTPELRCGKHQAVGTSPQRAAAQDSEQESAGMEGRDTHRLPRAL.

The first 18 residues, 1-18 (MRALAVLSVTLVMACTEA), serve as a signal peptide directing secretion. Topologically, residues 19–846 (FFPFISRGKE…TCVDSGRLPR (828 aa)) are extracellular. Asn129 carries an N-linked (GlcNAc...) asparagine glycan. A disulfide bond links Cys142 and Cys158. Asp238 is a binding site for heme b. The active-site Proton acceptor is His239. Asp240 contributes to the Ca(2+) binding site. 2 disulfide bridges follow: Cys259–Cys269 and Cys263–Cys286. Asn307 carries N-linked (GlcNAc...) asparagine glycosylation. Residues Thr321, Phe323, Asp325, and Ser327 each coordinate Ca(2+). The N-linked (GlcNAc...) asparagine glycan is linked to Asn342. Positions 399 and 494 each coordinate heme b. N-linked (GlcNAc...) asparagine glycosylation occurs at Asn569. Cystine bridges form between Cys598–Cys655 and Cys696–Cys721. The 56-residue stretch at 740 to 795 (DKCGFPESVENGDFVHCEESGRRVLVYSCRHGYELQGREQLTCTQEGWDFQPPLCK) folds into the Sushi domain. Positions 796-839 (DVNECADGAHPPCHASARCRNTKGGFQCLCADPYELGDDGRTCV) constitute an EGF-like; calcium-binding domain. Disulfide bonds link Cys800-Cys814, Cys808-Cys823, and Cys825-Cys838. A helical transmembrane segment spans residues 847–871 (VTWISMSLAALLIGGFAGLTSTVIC). At 872 to 933 (RWTRTGTKST…RDTHRLPRAL (62 aa)) the chain is on the cytoplasmic side. Positions 881–933 (TLPISETGGGTPELRCGKHQAVGTSPQRAAAQDSEQESAGMEGRDTHRLPRAL) are disordered. The span at 922 to 933 (EGRDTHRLPRAL) shows a compositional bias: basic and acidic residues.

Belongs to the peroxidase family. XPO subfamily. As to quaternary structure, interacts with DUOX1, DUOX2 and CYBA. Requires Ca(2+) as cofactor. Heme b serves as cofactor. Glycosylated. In terms of processing, heme is covalently bound through a H(2)O(2)-dependent autocatalytic process. Heme insertion is important for the delivery of protein at the cell surface. Post-translationally, cleaved in its N-terminal part.

The protein localises to the membrane. It is found in the cell surface. It carries out the reaction 2 iodide + H2O2 + 2 H(+) = diiodine + 2 H2O. The enzyme catalyses [thyroglobulin]-L-tyrosine + iodide + H2O2 + H(+) = [thyroglobulin]-3-iodo-L-tyrosine + 2 H2O. It catalyses the reaction [thyroglobulin]-3-iodo-L-tyrosine + iodide + H2O2 + H(+) = [thyroglobulin]-3,5-diiodo-L-tyrosine + 2 H2O. The catalysed reaction is 2 [thyroglobulin]-3,5-diiodo-L-tyrosine + H2O2 = [thyroglobulin]-L-thyroxine + [thyroglobulin]-dehydroalanine + 2 H2O. It carries out the reaction [thyroglobulin]-3-iodo-L-tyrosine + [thyroglobulin]-3,5-diiodo-L-tyrosine + H2O2 = [thyroglobulin]-3,3',5-triiodo-L-thyronine + [thyroglobulin]-dehydroalanine + 2 H2O. The protein operates within hormone biosynthesis; thyroid hormone biosynthesis. Its function is as follows. Iodination and coupling of the hormonogenic tyrosines in thyroglobulin to yield the thyroid hormones T(3) and T(4). The chain is Thyroid peroxidase from Homo sapiens (Human).